The following is a 509-amino-acid chain: MRHDTDPRPSTADLIDAVLDAPPPRPEVSEVGRVAELGDGIAIVTGLARALADEVLDFASGVSGIVFDLEPGRLGVVLLGPSQNVAMGEDVRRTGRVVSVPVGPATLGRVVDALGRPRDERDPVTDSPLAPVEAEAPDILSRTPVSRPLATGLKAVDAAVPVGLGQRQLIIGDRQTGKTSIAVDTILNQKDTGVICIYCAIGQRGDAVAKVIGALQGGEMLGQTVVIAAGDEDAPGLAYIAPYAAMSVAESFAAQGRDVLVVLDDLTHHARTYRELSLLLRRPPGREAFPGDIFYVHARLLERAGQFGEGAGSITALPVVETQAENLSAYIPTNLISITDGQIYLSPKLVRTNQFPAVDLGVSVSRVGGKAQARAFRAVGGNLRVTLSQFEELEEFARFGTRLDEDTRARLARGGAVRNALRQAERDPMAAHEQLAVLVAAMEGLLDGMDEAAAGAAMQAIRAAIRAADGGLPEIIAGDEKLTEDARGHILATARAALAQTGRGDGADA.

172-179 (GDRQTGKT) lines the ATP pocket.

It belongs to the ATPase alpha/beta chains family. As to quaternary structure, F-type ATPases have 2 components, CF(1) - the catalytic core - and CF(0) - the membrane proton channel. CF(1) has five subunits: alpha(3), beta(3), gamma(1), delta(1), epsilon(1). CF(0) has four main subunits: a(1), b(1), b'(1) and c(9-12).

It localises to the cell inner membrane. It carries out the reaction ATP + H2O + 4 H(+)(in) = ADP + phosphate + 5 H(+)(out). Functionally, produces ATP from ADP in the presence of a proton gradient across the membrane. The alpha chain is a regulatory subunit. The protein is ATP synthase subunit alpha 1 of Dinoroseobacter shibae (strain DSM 16493 / NCIMB 14021 / DFL 12).